Reading from the N-terminus, the 227-residue chain is Cytochrome c oxidase subunit 2 (227 aa).

The Mitochondrial intermembrane segment spans residues 1–14 (MAYPFQLGLQDATS). A helical membrane pass occupies residues 15–45 (PIMEELLHFHDHTLMIVFLISSLVLYIISLM). The Mitochondrial matrix segment spans residues 46 to 59 (LTTKLTHTSTMDAQ). A helical membrane pass occupies residues 60–87 (EVETVWTILPAIILILIALPSLRILYMM). At 88 to 227 (DEINNPSLTV…YFETWSALMV (140 aa)) the chain is on the mitochondrial intermembrane side. Positions 161, 196, 198, 200, 204, and 207 each coordinate Cu cation. Position 198 (Glu-198) interacts with Mg(2+). Tyr-218 is subject to Phosphotyrosine.

This sequence belongs to the cytochrome c oxidase subunit 2 family. In terms of assembly, component of the cytochrome c oxidase (complex IV, CIV), a multisubunit enzyme composed of 14 subunits. The complex is composed of a catalytic core of 3 subunits MT-CO1, MT-CO2 and MT-CO3, encoded in the mitochondrial DNA, and 11 supernumerary subunits COX4I, COX5A, COX5B, COX6A, COX6B, COX6C, COX7A, COX7B, COX7C, COX8 and NDUFA4, which are encoded in the nuclear genome. The complex exists as a monomer or a dimer and forms supercomplexes (SCs) in the inner mitochondrial membrane with NADH-ubiquinone oxidoreductase (complex I, CI) and ubiquinol-cytochrome c oxidoreductase (cytochrome b-c1 complex, complex III, CIII), resulting in different assemblies (supercomplex SCI(1)III(2)IV(1) and megacomplex MCI(2)III(2)IV(2)). Found in a complex with TMEM177, COA6, COX18, COX20, SCO1 and SCO2. Interacts with TMEM177 in a COX20-dependent manner. Interacts with COX20. Interacts with COX16. It depends on Cu cation as a cofactor.

It is found in the mitochondrion inner membrane. It catalyses the reaction 4 Fe(II)-[cytochrome c] + O2 + 8 H(+)(in) = 4 Fe(III)-[cytochrome c] + 2 H2O + 4 H(+)(out). Component of the cytochrome c oxidase, the last enzyme in the mitochondrial electron transport chain which drives oxidative phosphorylation. The respiratory chain contains 3 multisubunit complexes succinate dehydrogenase (complex II, CII), ubiquinol-cytochrome c oxidoreductase (cytochrome b-c1 complex, complex III, CIII) and cytochrome c oxidase (complex IV, CIV), that cooperate to transfer electrons derived from NADH and succinate to molecular oxygen, creating an electrochemical gradient over the inner membrane that drives transmembrane transport and the ATP synthase. Cytochrome c oxidase is the component of the respiratory chain that catalyzes the reduction of oxygen to water. Electrons originating from reduced cytochrome c in the intermembrane space (IMS) are transferred via the dinuclear copper A center (CU(A)) of subunit 2 and heme A of subunit 1 to the active site in subunit 1, a binuclear center (BNC) formed by heme A3 and copper B (CU(B)). The BNC reduces molecular oxygen to 2 water molecules using 4 electrons from cytochrome c in the IMS and 4 protons from the mitochondrial matrix. The sequence is that of Cytochrome c oxidase subunit 2 (MT-CO2) from Canis lupus familiaris (Dog).